The sequence spans 627 residues: MKKKLVSRLSYAAGAFGNDVFYATLSTYFIVFVTTHLFNAGDHKMIFIITNLITAIRIGEVLLDPLIGNAIDRTESRWGKFKPWVVGGGIISSLALLALFTDFGGINQSKPVVYLVIFGIVYLIMDIFYSFKDTGFWAMIPALSLDSREREKTSTFARVGSTIGANLVGVVITPIILFFSASKANPNGDKQGWFFFALIVAIVGILTSITVGLGTHEVKSALRESNEKTTLKQVFKVLGQNDQLLWLAFAYWFYGLGINTLNALQLYYFSYILGDARGYSLLYTINTFVGLISASFFPSLAKKFNRNRLFYACIAVMLLGIGVFSVASGSLALSLVGAEFFFIPQPLAFLVVLMIISDAVEYGQLKTGHRDEALTLSVRPLVDKLGGALSNWFVSLIALTAGMTTGATASTITAHGQMVFKLAMFALPAVMLLIAVSIFAKKVFLTEEKHAEIVDQLETQFGQSHAQKPAQAESFTLASPVSGQLMNLDMVDDPVFADKKLGDGFALVPADGKVYAPFAGTVRQLAKTRHSIVLENEHGVLVLIHLGLGTAKLNGTGFVSYVEEGSQVEAGQQILEFWDPAIKQAKLDDTVIVTVINSETFANSQMLLPIGHSVQALDDVFKLEGKN.

The tract at residues Met1 to Gln460 is permease. The next 12 helical transmembrane spans lie at Ala13–Val33, Ile46–Leu66, Trp84–Gly104, Pro111–Phe131, Val159–Phe179, Trp193–Leu213, Leu244–Leu264, Leu281–Ala301, Leu309–Gly329, Val336–Ile356, Trp392–Ile412, and Val419–Phe439. Residues Asp493–Asn597 enclose the PTS EIIA type-1 domain. His545 is subject to Phosphohistidine; by HPr.

This sequence in the N-terminal section; belongs to the sodium:galactoside symporter (TC 2.A.2) family.

It localises to the cell membrane. Functionally, responsible for transport of beta-galactosides into the cell, with the concomitant uptake of protons (symport system), and also for transport of homologous and heterologous exchange of beta-galactosides. This chain is Lactose permease (lacY), found in Lactobacillus delbrueckii subsp. bulgaricus (strain ATCC 11842 / DSM 20081 / BCRC 10696 / JCM 1002 / NBRC 13953 / NCIMB 11778 / NCTC 12712 / WDCM 00102 / Lb 14).